A 298-amino-acid chain; its full sequence is Protoheme IX farnesyltransferase (298 aa).

The next 9 helical transmembrane spans lie at 16 to 36 (VVAL…PDMP), 45 to 65 (ALGF…NQLL), 93 to 113 (VFAG…VNVI), 114 to 134 (TAVL…VYLK), 141 to 161 (IVIG…AVTG), 172 to 192 (SLLV…LAIF), 223 to 243 (VLLA…VFYL), 244 to 264 (GGAI…LNPP), and 277 to 297 (IVYL…LPWV).

The protein belongs to the UbiA prenyltransferase family. Protoheme IX farnesyltransferase subfamily.

The protein resides in the cell inner membrane. It carries out the reaction heme b + (2E,6E)-farnesyl diphosphate + H2O = Fe(II)-heme o + diphosphate. The protein operates within porphyrin-containing compound metabolism; heme O biosynthesis; heme O from protoheme: step 1/1. Its function is as follows. Converts heme B (protoheme IX) to heme O by substitution of the vinyl group on carbon 2 of heme B porphyrin ring with a hydroxyethyl farnesyl side group. In Xanthomonas euvesicatoria pv. vesicatoria (strain 85-10) (Xanthomonas campestris pv. vesicatoria), this protein is Protoheme IX farnesyltransferase.